Here is a 337-residue protein sequence, read N- to C-terminus: Fructose-1,6-bisphosphatase class 1 (337 aa).

Residues E89, D112, L114, and D115 each contribute to the Mg(2+) site. Substrate contacts are provided by residues 115 to 118, N208, Y241, and K271; that span reads DGSS. E277 is a binding site for Mg(2+).

This sequence belongs to the FBPase class 1 family. Homotetramer. Requires Mg(2+) as cofactor.

It localises to the cytoplasm. The catalysed reaction is beta-D-fructose 1,6-bisphosphate + H2O = beta-D-fructose 6-phosphate + phosphate. The protein operates within carbohydrate biosynthesis; gluconeogenesis. The sequence is that of Fructose-1,6-bisphosphatase class 1 from Yersinia pestis bv. Antiqua (strain Antiqua).